A 145-amino-acid polypeptide reads, in one-letter code: MELHSLKSTPGSRKEKHRKGRGHAAGKGKQAGKGQSGQRKRSKVRLGFEGGQNPWFRRLPKRGFKNINHIEYQPLSLEALEKHFLENEVVDLEKIYEKRLVTKRTLPVKLLANGKLTKKLTIHVHSASQSAIQAVESLGGKVEVL.

Positions 1 to 11 (MELHSLKSTPG) are enriched in polar residues. Residues 1–48 (MELHSLKSTPGSRKEKHRKGRGHAAGKGKQAGKGQSGQRKRSKVRLGF) form a disordered region. Basic residues predominate over residues 14–26 (KEKHRKGRGHAAG).

This sequence belongs to the universal ribosomal protein uL15 family. Part of the 50S ribosomal subunit.

In terms of biological role, binds to the 23S rRNA. The chain is Large ribosomal subunit protein uL15 from Mycoplasmopsis pulmonis (strain UAB CTIP) (Mycoplasma pulmonis).